Reading from the N-terminus, the 46-residue chain is Probable butyrate kinase (46 aa).

This sequence belongs to the acetokinase family.

It is found in the cytoplasm. It catalyses the reaction butanoate + ATP = butanoyl phosphate + ADP. This is Probable butyrate kinase (buk) from Geobacillus stearothermophilus (Bacillus stearothermophilus).